A 268-amino-acid polypeptide reads, in one-letter code: Lectin ESA-2 (268 aa).

4 repeat units span residues 1–67 (GRYT…RRGE), 68–135 (SNVY…QSGG), 136–202 (DTYN…LSGA), and 203–268 (NNYS…VATS). The interval 1-268 (GRYTVQNQWG…PIGFKGVATS (268 aa)) is 4 X approximate tandem repeats.

Monomer.

Its function is as follows. Lectin specific for high mannose N-glycans, recognizes the branched moiety of these glycans. Does not recognize other types of N-glycans or monosaccharides. Agglutinates trypsin-treated sheep and rabbit erythrocytes and untreated sheep erythrocytes. Has mitogenic activity on mouse lymphocytes. Does not require metal ions for activity. The polypeptide is Lectin ESA-2 (Eucheuma serra (Marine red alga)).